Reading from the N-terminus, the 579-residue chain is A-type ATP synthase subunit A (579 aa).

ATP is bound at residue 229-236 (GPFGSGKT).

Belongs to the ATPase alpha/beta chains family. In terms of assembly, has multiple subunits with at least A(3), B(3), C, D, E, F, H, I and proteolipid K(x).

It localises to the cell membrane. It catalyses the reaction ATP + H2O + 4 H(+)(in) = ADP + phosphate + 5 H(+)(out). Functionally, component of the A-type ATP synthase that produces ATP from ADP in the presence of a proton gradient across the membrane. The A chain is the catalytic subunit. The chain is A-type ATP synthase subunit A from Methanocella arvoryzae (strain DSM 22066 / NBRC 105507 / MRE50).